Consider the following 201-residue polypeptide: Transcriptional regulator GfcR (201 aa).

This sequence belongs to the purine/pyrimidine phosphoribosyltransferase family. GfcR subfamily.

This Methanobrevibacter smithii (strain ATCC 35061 / DSM 861 / OCM 144 / PS) protein is Transcriptional regulator GfcR.